We begin with the raw amino-acid sequence, 919 residues long: MAASRGPPLLGFRALALALLLAILLLLGCSAAAAYAGAEGVLRQVVGRRGDDGGGGNFFEPFNVTYDHRAVLIGGKRRMLVSAGLHYPRATPEMWPSLIAKCKEGGADVIETYVFWNGHEPAKGQYYFEERFDLVKFAKLVAAEGLFLFLRIGPYACAEWNFGGFPVWLRDIPGIEFRTDNEPFKAEMQTFVTKIVTLMKEEKLYSWQGGPIILQQIENEYGNIQGNYGQAGKRYMQWAAQMAIGLDTGIPWVMCRQTDAPEEIIDTCNAFYCDGFKPNSYNKPTIWTEDWDGWYADWGGALPHRPAEDSAFAVARFYQRGGSLQNYYMYFGGTNFARTAGGPLQITSYDYDAPIDEYGILRQPKWGHLKDLHTAIKLCEPALIAVDGSPQYIKLGSMQEAHVYSTGEVHTNGSMAGNAQICSAFLANIDEHKYASVWIFGKSYSLPPWSVSILPDCENVAFNTARIGAQTSVFTVESGSPSRSSRHKPSILSLTSGGPYLSSTWWTSKETIGTWGGNNFAVQGILEHLNVTKDISDYLWYTTRVNISDADVAFWSSKGVLPSLTIDKIRDVARVFVNGKLAGSQVGHWVSLKQPIQLVEGLNELTLLSEIVGLQNYGAFLEKDGAGFRGQVTLTGLSDGDVDLTNSLWTYQVGLKGEFSMIYAPEKQGCAGWSRMQKDSVQPFTWYKTMFSTPKGTDPVAIDLGSMGKGQAWVNGHLIGRYWSLVAPESGCSSSCYYPGAYNERKCQSNCGMPTQNWYHIPREWLKESDNLLVLFEETGGDPSLISLEAHYAKTVCSRISENYYPPLSAWSHLSSGRASVNAATPELRLQCDDGHVISEITFASYGTPSGGCLNFSKGNCHASSTLDLVTEACVGNTKCAISVSNDVFGDPCRGVLKDLAVEAKCSPPSTTKEPRGEM.

The N-terminal stretch at 1–31 (MAASRGPPLLGFRALALALLLAILLLLGCSA) is a signal peptide. A glycan (N-linked (GlcNAc...) asparagine) is linked at Asn63. The active-site Proton donor is the Glu220. The active-site Nucleophile is Glu289. Residues Asn412, Asn530, Asn546, and Asn855 are each glycosylated (N-linked (GlcNAc...) asparagine). The region spanning 822-907 (NAATPELRLQ…KDLAVEAKCS (86 aa)) is the SUEL-type lectin domain.

This sequence belongs to the glycosyl hydrolase 35 family.

The protein localises to the secreted. It localises to the extracellular space. The protein resides in the apoplast. The enzyme catalyses Hydrolysis of terminal non-reducing beta-D-galactose residues in beta-D-galactosides.. The polypeptide is Beta-galactosidase 15 (Oryza sativa subsp. japonica (Rice)).